We begin with the raw amino-acid sequence, 450 residues long: MNEILNTKDINAIGEFFIETWGCQMNEEDSEKLSGMLKKEGYIRTEERENADVIIFNTCCVRENAELKVYGNLGILKGLKSKNPNLIIAVTGCMMQQKGMAETIKKKFPFVDIIIGTHNLHNFPNYLNEVKKKDTSILKIQEKEDSIIENMPIDRKNSMKAFVTIMYGCNNFCTYCIVPYVRGRERSRTPENIEDEIKKLISEGYKEITLLGQNVNSYGKDLEPKVTFADLLERVNTIDGLERVRFMTSHPKDLTDDVIEAIAKCDKLCEQIHLPVQSGSSEILKKMNRHYDREKYLDVVSKIKKLIPNVALSTDIIVGFPGETEKDFEETLSLVKEVEYDSAFTFLYSIRKGTPAAKFEDQVPEDVKHKRFNRLVEVVNEISAKKNKAYEGKIEEVLVEGTSKNDENKLMGRTRTGKLVNFIGDKDSIGKLVNVKIIKANSFSLTGEEI.

The MTTase N-terminal domain maps to 14 to 132 (GEFFIETWGC…FPNYLNEVKK (119 aa)). Residues Cys-23, Cys-59, Cys-93, Cys-169, Cys-173, and Cys-176 each coordinate [4Fe-4S] cluster. The Radical SAM core domain occupies 155 to 385 (RKNSMKAFVT…VEVVNEISAK (231 aa)). One can recognise a TRAM domain in the interval 388-450 (KAYEGKIEEV…NSFSLTGEEI (63 aa)).

This sequence belongs to the methylthiotransferase family. MiaB subfamily. In terms of assembly, monomer. [4Fe-4S] cluster is required as a cofactor.

It localises to the cytoplasm. It catalyses the reaction N(6)-dimethylallyladenosine(37) in tRNA + (sulfur carrier)-SH + AH2 + 2 S-adenosyl-L-methionine = 2-methylsulfanyl-N(6)-dimethylallyladenosine(37) in tRNA + (sulfur carrier)-H + 5'-deoxyadenosine + L-methionine + A + S-adenosyl-L-homocysteine + 2 H(+). Catalyzes the methylthiolation of N6-(dimethylallyl)adenosine (i(6)A), leading to the formation of 2-methylthio-N6-(dimethylallyl)adenosine (ms(2)i(6)A) at position 37 in tRNAs that read codons beginning with uridine. The chain is tRNA-2-methylthio-N(6)-dimethylallyladenosine synthase from Clostridium botulinum (strain Loch Maree / Type A3).